The primary structure comprises 95 residues: Cobalt transport protein CbiN (95 aa).

2 consecutive transmembrane segments (helical) span residues 5 to 25 (HIILLAIVAIIIALPLIIYAG) and 67 to 87 (LLFALQAAIGAIIIGYYIGYY).

The protein belongs to the CbiN family. As to quaternary structure, forms an energy-coupling factor (ECF) transporter complex composed of an ATP-binding protein (A component, CbiO), a transmembrane protein (T component, CbiQ) and 2 possible substrate-capture proteins (S components, CbiM and CbiN) of unknown stoichimetry.

It localises to the cell membrane. The protein operates within cofactor biosynthesis; adenosylcobalamin biosynthesis. Part of the energy-coupling factor (ECF) transporter complex CbiMNOQ involved in cobalt import. This Methanocaldococcus jannaschii (strain ATCC 43067 / DSM 2661 / JAL-1 / JCM 10045 / NBRC 100440) (Methanococcus jannaschii) protein is Cobalt transport protein CbiN.